The primary structure comprises 311 residues: GTP cyclohydrolase FolE2 (311 aa).

Belongs to the GTP cyclohydrolase IV family.

The enzyme catalyses GTP + H2O = 7,8-dihydroneopterin 3'-triphosphate + formate + H(+). It participates in cofactor biosynthesis; 7,8-dihydroneopterin triphosphate biosynthesis; 7,8-dihydroneopterin triphosphate from GTP: step 1/1. Converts GTP to 7,8-dihydroneopterin triphosphate. The polypeptide is GTP cyclohydrolase FolE2 (Hydrogenovibrio crunogenus (strain DSM 25203 / XCL-2) (Thiomicrospira crunogena)).